The chain runs to 309 residues: GTP cyclohydrolase MptA (309 aa).

The protein belongs to the GTP cyclohydrolase IV family. As to quaternary structure, homodimer. It depends on Fe(2+) as a cofactor.

It catalyses the reaction GTP + H2O = 7,8-dihydroneopterin 2',3'-cyclic phosphate + formate + diphosphate + H(+). It participates in cofactor biosynthesis; 5,6,7,8-tetrahydromethanopterin biosynthesis. Converts GTP to 7,8-dihydro-D-neopterin 2',3'-cyclic phosphate, the first intermediate in the biosynthesis of coenzyme methanopterin. This chain is GTP cyclohydrolase MptA, found in Haloquadratum walsbyi (strain DSM 16790 / HBSQ001).